Here is a 70-residue protein sequence, read N- to C-terminus: MASQCPVKNSWPELVGTNGDIAAGIIQTENANVKAIVVKEGLPITQDLNFNRVRVFVDENRVVTQVPAIG.

At Ala-2 the chain carries N-acetylalanine. Position 5 is an S-glutathionyl cysteine; alternate (Cys-5).

Belongs to the protease inhibitor I13 (potato type I serine protease inhibitor) family. Monomer and homodimer; disulfide-linked. Occurs in 3 forms that differ in the modification of Cys-5, HPI-1 forms a homodimer through a disulfide bond, HPI-2a is modified by glutathionylation, and HPI-2b is covalently modified by addition of an unidentified adduct but not by a disulfide linkage.

Functionally, inhibitor of serine proteases, strongly inhibits subtilisin A and weakly inhibits trypsin. Does not inhibit chymotrypsin, papain, pepsin, pronase E, protease type XIII and thermolysin. HPI-1 inhibits subtilisin A with an Ki of 0.21 nM. HPI-2a inhibits subtilisin A with an Ki of 0.08 nM. HPI-2b inhibits subtilisin A with an Ki of 0.1 nM. The sequence is that of Protease inhibitor HPI from Hevea brasiliensis (Para rubber tree).